We begin with the raw amino-acid sequence, 335 residues long: Glycerol-3-phosphate dehydrogenase [NAD(P)+] (335 aa).

S15, Y16, H36, and K110 together coordinate NADPH. Sn-glycerol 3-phosphate contacts are provided by K110, G139, and T141. Residue A143 participates in NADPH binding. Residues K195, D248, S258, R259, and N260 each contribute to the sn-glycerol 3-phosphate site. The Proton acceptor role is filled by K195. R259 contacts NADPH. Positions 283 and 285 each coordinate NADPH.

It belongs to the NAD-dependent glycerol-3-phosphate dehydrogenase family.

The protein resides in the cytoplasm. It carries out the reaction sn-glycerol 3-phosphate + NAD(+) = dihydroxyacetone phosphate + NADH + H(+). The catalysed reaction is sn-glycerol 3-phosphate + NADP(+) = dihydroxyacetone phosphate + NADPH + H(+). Its pathway is membrane lipid metabolism; glycerophospholipid metabolism. In terms of biological role, catalyzes the reduction of the glycolytic intermediate dihydroxyacetone phosphate (DHAP) to sn-glycerol 3-phosphate (G3P), the key precursor for phospholipid synthesis. The sequence is that of Glycerol-3-phosphate dehydrogenase [NAD(P)+] from Haemophilus influenzae (strain ATCC 51907 / DSM 11121 / KW20 / Rd).